A 333-amino-acid chain; its full sequence is Flotillin-like protein FloA (333 aa).

Residues isoleucine 10–phenylalanine 30 form a helical membrane-spanning segment.

The protein belongs to the flotillin-like FloA family. In terms of assembly, homooligomerizes.

Its subcellular location is the cell membrane. The protein localises to the membrane raft. Found in functional membrane microdomains (FMM) that may be equivalent to eukaryotic membrane rafts. FMMs are highly dynamic and increase in number as cells age. Flotillins are thought to be important factors in membrane fluidity. The chain is Flotillin-like protein FloA from Bacteroides fragilis (strain ATCC 25285 / DSM 2151 / CCUG 4856 / JCM 11019 / LMG 10263 / NCTC 9343 / Onslow / VPI 2553 / EN-2).